Consider the following 340-residue polypeptide: UDP-3-O-acylglucosamine N-acyltransferase (340 aa).

The active-site Proton acceptor is His-247.

Belongs to the transferase hexapeptide repeat family. LpxD subfamily. As to quaternary structure, homotrimer.

It catalyses the reaction a UDP-3-O-[(3R)-3-hydroxyacyl]-alpha-D-glucosamine + a (3R)-hydroxyacyl-[ACP] = a UDP-2-N,3-O-bis[(3R)-3-hydroxyacyl]-alpha-D-glucosamine + holo-[ACP] + H(+). Its pathway is bacterial outer membrane biogenesis; LPS lipid A biosynthesis. Catalyzes the N-acylation of UDP-3-O-acylglucosamine using 3-hydroxyacyl-ACP as the acyl donor. Is involved in the biosynthesis of lipid A, a phosphorylated glycolipid that anchors the lipopolysaccharide to the outer membrane of the cell. The chain is UDP-3-O-acylglucosamine N-acyltransferase from Caulobacter sp. (strain K31).